We begin with the raw amino-acid sequence, 147 residues long: Hemoglobin subunit beta (147 aa).

In terms of domain architecture, Globin spans Glu3–His147. Residues His64 and His93 each coordinate heme b.

This sequence belongs to the globin family. As to quaternary structure, heterotetramer of two alpha chains and two beta chains. As to expression, red blood cells.

Its function is as follows. Involved in oxygen transport from gills to the various peripheral tissues. The chain is Hemoglobin subunit beta (hbb) from Trematomus hansoni (Striped rockcod).